We begin with the raw amino-acid sequence, 503 residues long: Maturase K (503 aa).

Belongs to the intron maturase 2 family. MatK subfamily.

The protein localises to the plastid. It is found in the chloroplast. Functionally, usually encoded in the trnK tRNA gene intron. Probably assists in splicing its own and other chloroplast group II introns. The chain is Maturase K from Rubus ursinus (California blackberry).